The following is a 144-amino-acid chain: Cathelicidin-4 (144 aa).

An N-terminal signal peptide occupies residues 1 to 29; the sequence is MQTQRASLSLGRWSLWLLLLGLVVPSASA. Residues 30 to 130 constitute a propeptide that is removed on maturation; the sequence is QALSYREAVL…DLNCNELQSV (101 aa). Cystine bridges form between cysteine 85/cysteine 96 and cysteine 107/cysteine 124. The residue at position 143 (arginine 143) is an Arginine amide.

This sequence belongs to the cathelicidin family. Post-translationally, elastase might be responsible for its maturation. As to expression, large granules of neutrophils.

It is found in the secreted. Potent microbicidal activity; active against S.aureus and E.coli. In Bos taurus (Bovine), this protein is Cathelicidin-4 (CATHL4).